The primary structure comprises 308 residues: MIVSTLEHILTHISLSIVSILITIELRIFLDDEIKKLYDSSERGMLITFLCITGLLANNWIYLGHFPLSDLSESLIFLSWSFALIHSIGYFTKNLKFLSTITSQSTLFTQGFATSGILTKIQKSSILIPALKSEWLIMHVSLMILGYAALLCGSLLSVALMVITVRNDGKFFFKSNNFLFREISYQNKNFFYAINYYKTQLIKELDFWSYQVISLGFIFLTIGILSGAVWANEAWGSYWSWDPKETWAFITWIVFAIYLHTRININLQSTNSAIVASLGFIIIWICYFGVNLVGLGLHSYGSFPSTSN.

7 helical membrane-spanning segments follow: residues 2-22 (IVST…SILI), 44-64 (GMLI…IYLG), 71-91 (LSES…IGYF), 143-163 (MILG…LMVI), 212-232 (VISL…VWAN), 247-267 (WAFI…NINL), and 273-293 (AIVA…VNLV).

The protein belongs to the CcmF/CycK/Ccl1/NrfE/CcsA family. May interact with Ccs1.

Its subcellular location is the plastid membrane. Its function is as follows. Required during biogenesis of c-type cytochromes (cytochrome c6 and cytochrome f) at the step of heme attachment. In Cuscuta reflexa (Southern Asian dodder), this protein is Cytochrome c biogenesis protein CcsA.